The chain runs to 90 residues: MKLNYVGIVISRAMPKTAKVRVAKEKFHPVVKKYVTQYQNYMVQDDLNCNVGDAVTIQPCRPRSATKRFEIIKILSTANRMSPASEISKE.

The protein belongs to the universal ribosomal protein uS17 family. As to quaternary structure, component of the mitochondrial small ribosomal subunit (mt-SSU). Mature yeast 74S mitochondrial ribosomes consist of a small (37S) and a large (54S) subunit. The 37S small subunit contains a 15S ribosomal RNA (15S mt-rRNA) and at least 32 different proteins. The 54S large subunit contains a 21S rRNA (21S mt-rRNA) and at least 45 different proteins.

The protein resides in the mitochondrion. Component of the mitochondrial ribosome (mitoribosome), a dedicated translation machinery responsible for the synthesis of mitochondrial genome-encoded proteins, including at least some of the essential transmembrane subunits of the mitochondrial respiratory chain. The mitoribosomes are attached to the mitochondrial inner membrane and translation products are cotranslationally integrated into the membrane. uS17m may have a meiosis-specific role as it accumulates during the middle stage of sporulation. The polypeptide is Small ribosomal subunit protein uS17m (Schizosaccharomyces pombe (strain 972 / ATCC 24843) (Fission yeast)).